A 256-amino-acid chain; its full sequence is Hemin import ATP-binding protein HmuV (256 aa).

The 237-residue stretch at 2 to 238 (ISAQNLVYSL…QALTMLYGAD (237 aa)) folds into the ABC transporter domain. 34–41 (GPNGAGKS) is an ATP binding site.

This sequence belongs to the ABC transporter superfamily. Heme (hemin) importer (TC 3.A.1.14.5) family. As to quaternary structure, the complex is composed of two ATP-binding proteins (HmuV), two transmembrane proteins (HmuU) and a solute-binding protein (HmuT).

It is found in the cell inner membrane. In terms of biological role, part of the ABC transporter complex HmuTUV involved in hemin import. Responsible for energy coupling to the transport system. The chain is Hemin import ATP-binding protein HmuV from Shigella dysenteriae serotype 1 (strain Sd197).